We begin with the raw amino-acid sequence, 109 residues long: U4-lycotoxin-Ls1c (109 aa).

The signal sequence occupies residues 1–22; it reads MKVLVLFSVLFLTLFSYSSTEA. Positions 23-44 are excised as a propeptide; that stretch reads IDEFDSDAEDDMLSLMANEQVR. A knottin domain region spans residues 45–88; sequence AKACTPRLHDCSHDRHSCCRGELFKDVCYCFYPEGEDITEVCSC. 4 cysteine pairs are disulfide-bonded: Cys-48-Cys-63, Cys-55-Cys-72, Cys-62-Cys-88, and Cys-74-Cys-86. The tract at residues 89–108 is linear cationic cytotoxin domain; it reads QQPKSHKYIEKVVDKAKTVV.

This sequence belongs to the neurotoxin 19 (CSTX) family. 05 (U4-Lctx) subfamily. In terms of tissue distribution, expressed by the venom gland.

Its subcellular location is the secreted. In terms of biological role, enhances the high-affinity desensitization of human P2RX3 purinoceptors. The polypeptide is U4-lycotoxin-Ls1c (Lycosa singoriensis (Wolf spider)).